Consider the following 370-residue polypeptide: Peptide chain release factor 1 (370 aa).

N5-methylglutamine is present on Gln-237. Basic and acidic residues predominate over residues 286-296 (ERQRSARDATR). Positions 286–310 (ERQRSARDATRKSQVGTGDRSEKIR) are disordered.

It belongs to the prokaryotic/mitochondrial release factor family. Post-translationally, methylated by PrmC. Methylation increases the termination efficiency of RF1.

It localises to the cytoplasm. Its function is as follows. Peptide chain release factor 1 directs the termination of translation in response to the peptide chain termination codons UAG and UAA. The sequence is that of Peptide chain release factor 1 from Anaeromyxobacter dehalogenans (strain 2CP-C).